Consider the following 722-residue polypeptide: Probable glycerol-3-phosphate dehydrogenase, mitochondrial (722 aa).

A mitochondrion-targeting transit peptide spans 1–43 (MSWVRFTKTGVAVVATSAAAVLALDMTNERRFQRQVKDHFRTV). 76–104 (DVLIIGGGATGAGVALDAQTRGLKTALVE) is an FAD binding site. EF-hand domains are found at residues 624–659 (EEMQ…HNQK) and 660–695 (IDER…LKGG). Ca(2+) contacts are provided by D673, N675, N677, E679, and E684.

This sequence belongs to the FAD-dependent glycerol-3-phosphate dehydrogenase family. FAD serves as cofactor.

The protein localises to the mitochondrion. It carries out the reaction a quinone + sn-glycerol 3-phosphate = dihydroxyacetone phosphate + a quinol. It participates in polyol metabolism; glycerol degradation via glycerol kinase pathway; glycerone phosphate from sn-glycerol 3-phosphate (anaerobic route): step 1/1. Calcium-binding enhances the activity of the enzyme. The chain is Probable glycerol-3-phosphate dehydrogenase, mitochondrial from Caenorhabditis elegans.